A 466-amino-acid polypeptide reads, in one-letter code: Asparagine--tRNA ligase (466 aa).

The protein belongs to the class-II aminoacyl-tRNA synthetase family. Homodimer.

The protein resides in the cytoplasm. The catalysed reaction is tRNA(Asn) + L-asparagine + ATP = L-asparaginyl-tRNA(Asn) + AMP + diphosphate + H(+). The protein is Asparagine--tRNA ligase of Shewanella frigidimarina (strain NCIMB 400).